A 396-amino-acid polypeptide reads, in one-letter code: Elongation factor Tu (396 aa).

The 197-residue stretch at 10 to 206 folds into the tr-type G domain; sequence KPHCNIGTIG…AVDEFIPQPT (197 aa). Positions 19–26 are G1; sequence GHVDHGKT. 19-26 is a binding site for GTP; sequence GHVDHGKT. Mg(2+) is bound at residue T26. Residues 60–64 form a G2 region; sequence GITIS. The segment at 81–84 is G3; it reads DCPG. GTP is bound by residues 81-85 and 136-139; these read DCPGH and NKVD. The G4 stretch occupies residues 136 to 139; the sequence is NKVD. A G5 region spans residues 174-176; sequence SAL.

This sequence belongs to the TRAFAC class translation factor GTPase superfamily. Classic translation factor GTPase family. EF-Tu/EF-1A subfamily. In terms of assembly, monomer.

It localises to the cytoplasm. It catalyses the reaction GTP + H2O = GDP + phosphate + H(+). In terms of biological role, GTP hydrolase that promotes the GTP-dependent binding of aminoacyl-tRNA to the A-site of ribosomes during protein biosynthesis. This Pelagibacter ubique (strain HTCC1062) protein is Elongation factor Tu.